The following is a 275-amino-acid chain: Anthracycline biosynthesis protein DauV (275 aa).

2 consecutive VOC domains span residues 8-136 (APAW…VWRK) and 150-263 (SVGW…VVEL).

It participates in antibiotic biosynthesis; daunorubicin biosynthesis. It functions in the pathway antibiotic biosynthesis; carminomycin biosynthesis. Its function is as follows. Involved in the biosynthesis of the anthracyclines carminomycin and daunorubicin (daunomycin) which are aromatic polyketide antibiotics that exhibit high cytotoxicity and are widely applied in the chemotherapy of a variety of cancers. Acts jointly with DoxA in the conversion of 13-deoxycarminomycin and 13-deoxydaunorubicin to yield carminomycin and daunorubicin, respectively. The chain is Anthracycline biosynthesis protein DauV (dauV) from Streptomyces sp. (strain C5).